The following is a 72-amino-acid chain: Translation initiation factor IF-1 (72 aa).

Residues 1-72 form the S1-like domain; that stretch reads MAKDDVIEVE…TRGRITYRYK (72 aa). Position 60 is a phosphotyrosine (Y60).

Belongs to the IF-1 family. In terms of assembly, component of the 30S ribosomal translation pre-initiation complex which assembles on the 30S ribosome in the order IF-2 and IF-3, IF-1 and N-formylmethionyl-tRNA(fMet); mRNA recruitment can occur at any time during PIC assembly.

The protein resides in the cytoplasm. Functionally, one of the essential components for the initiation of protein synthesis. Stabilizes the binding of IF-2 and IF-3 on the 30S subunit to which N-formylmethionyl-tRNA(fMet) subsequently binds. Helps modulate mRNA selection, yielding the 30S pre-initiation complex (PIC). Upon addition of the 50S ribosomal subunit IF-1, IF-2 and IF-3 are released leaving the mature 70S translation initiation complex. This Geobacillus kaustophilus (strain HTA426) protein is Translation initiation factor IF-1.